Consider the following 440-residue polypeptide: Chromosome partition protein MukF (440 aa).

The tract at residues 208–236 (LDETSGNLRELQDTLNAAGDKLQSQLLRI) is leucine-zipper.

The protein belongs to the MukF family. Interacts, and probably forms a ternary complex, with MukE and MukB via its C-terminal region. The complex formation is stimulated by calcium or magnesium. It is required for an interaction between MukE and MukB.

It localises to the cytoplasm. The protein resides in the nucleoid. Involved in chromosome condensation, segregation and cell cycle progression. May participate in facilitating chromosome segregation by condensation DNA from both sides of a centrally located replisome during cell division. Not required for mini-F plasmid partitioning. Probably acts via its interaction with MukB and MukE. Overexpression results in anucleate cells. It has a calcium binding activity. This is Chromosome partition protein MukF from Histophilus somni (strain 2336) (Haemophilus somnus).